A 622-amino-acid chain; its full sequence is Chaperone protein HscA homolog (622 aa).

Belongs to the heat shock protein 70 family.

Functionally, chaperone involved in the maturation of iron-sulfur cluster-containing proteins. Has a low intrinsic ATPase activity which is markedly stimulated by HscB. This chain is Chaperone protein HscA homolog, found in Burkholderia ambifaria (strain MC40-6).